The chain runs to 561 residues: Urocanate hydratase (561 aa).

Residues 52–53 (GG), Q130, 176–178 (GMG), E196, R201, 242–243 (NA), 263–267 (QTSAH), 273–274 (YL), and Y322 contribute to the NAD(+) site. C410 is a catalytic residue. G492 is a binding site for NAD(+).

This sequence belongs to the urocanase family. The cofactor is NAD(+).

The protein localises to the cytoplasm. The enzyme catalyses 4-imidazolone-5-propanoate = trans-urocanate + H2O. Its pathway is amino-acid degradation; L-histidine degradation into L-glutamate; N-formimidoyl-L-glutamate from L-histidine: step 2/3. In terms of biological role, catalyzes the conversion of urocanate to 4-imidazolone-5-propionate. This is Urocanate hydratase from Salmonella typhi.